The sequence spans 243 residues: Urease accessory protein UreF (243 aa).

Belongs to the UreF family. As to quaternary structure, ureD, UreF and UreG form a complex that acts as a GTP-hydrolysis-dependent molecular chaperone, activating the urease apoprotein by helping to assemble the nickel containing metallocenter of UreC. The UreE protein probably delivers the nickel.

The protein localises to the cytoplasm. Its function is as follows. Required for maturation of urease via the functional incorporation of the urease nickel metallocenter. The chain is Urease accessory protein UreF from Rhodopseudomonas palustris (strain BisB5).